The following is a 218-amino-acid chain: Small ribosomal subunit protein uS7 (218 aa).

This sequence belongs to the universal ribosomal protein uS7 family. In terms of assembly, part of the 30S ribosomal subunit.

One of the primary rRNA binding proteins, it binds directly to 16S rRNA where it nucleates assembly of the head domain of the 30S subunit. Is located at the subunit interface close to the decoding center. This chain is Small ribosomal subunit protein uS7 (rps7), found in Pyrococcus horikoshii (strain ATCC 700860 / DSM 12428 / JCM 9974 / NBRC 100139 / OT-3).